The primary structure comprises 190 residues: CASP-like protein 1E2 (190 aa).

The span at 1–12 (MENEGKNNMNGM) shows a compositional bias: low complexity. The interval 1-24 (MENEGKNNMNGMEMEKGKRESRSR) is disordered. Residues 1–28 (MENEGKNNMNGMEMEKGKRESRSRKGVE) lie on the Cytoplasmic side of the membrane. Residues 13–24 (EMEKGKRESRSR) are compositionally biased toward basic and acidic residues. The helical transmembrane segment at 29-49 (LTMRVLALVLTMAAATVLGVA) threads the bilayer. Topologically, residues 50 to 83 (KQTKVVSIKLIPALPPLDITTTAKASYLSAFVYN) are extracellular. A helical transmembrane segment spans residues 84–104 (ISANAIACGYTAISIAILMIS). Topologically, residues 105–111 (RGRRSKK) are cytoplasmic. The helical transmembrane segment at 112–132 (LLMAVLLGDLVMVALLFSGTG) threads the bilayer. Residues 133–163 (AASAIGLMGLQGNKHVMWNKVCGVFGKFCHR) lie on the Extracellular side of the membrane. The helical transmembrane segment at 164 to 184 (AAPSLPLTFLAAVVFMFLVVL) threads the bilayer. The Cytoplasmic segment spans residues 185–190 (DAIKLP).

Belongs to the Casparian strip membrane proteins (CASP) family. In terms of assembly, homodimer and heterodimers.

The protein resides in the cell membrane. The sequence is that of CASP-like protein 1E2 from Arabidopsis lyrata subsp. lyrata (Lyre-leaved rock-cress).